The chain runs to 397 residues: Tryptophan synthase beta chain (397 aa).

Lysine 87 is subject to N6-(pyridoxal phosphate)lysine.

The protein belongs to the TrpB family. In terms of assembly, tetramer of two alpha and two beta chains. It depends on pyridoxal 5'-phosphate as a cofactor.

It carries out the reaction (1S,2R)-1-C-(indol-3-yl)glycerol 3-phosphate + L-serine = D-glyceraldehyde 3-phosphate + L-tryptophan + H2O. It participates in amino-acid biosynthesis; L-tryptophan biosynthesis; L-tryptophan from chorismate: step 5/5. Its function is as follows. The beta subunit is responsible for the synthesis of L-tryptophan from indole and L-serine. The sequence is that of Tryptophan synthase beta chain from Escherichia fergusonii (strain ATCC 35469 / DSM 13698 / CCUG 18766 / IAM 14443 / JCM 21226 / LMG 7866 / NBRC 102419 / NCTC 12128 / CDC 0568-73).